Consider the following 937-residue polypeptide: Protocadherin alpha-7 (937 aa).

A signal peptide spans 1 to 29 (MVCPNGYDPGGRHLLLFIIILAAWEAGRG). 6 Cadherin domains span residues 30-133 (QLHY…PPVF), 134-242 (PATQ…APVF), 243-350 (DRTL…APQL), 351-455 (TLTS…APAF), 456-565 (AQPE…APAL), and 581-678 (VPRS…APKA). Over 30–697 (QLHYSVPEEA…GPETELVDVN (668 aa)) the chain is Extracellular. A disulfide bridge connects residues Cys-96 and Cys-102. N-linked (GlcNAc...) asparagine glycans are attached at residues Asn-254 and Asn-265. Asn-548 is a glycosylation site (N-linked (GlcNAc...) asparagine). The chain crosses the membrane as a helical span at residues 698-718 (VYLIIAICAVSSLLVLTLLLY). The Cytoplasmic portion of the chain corresponds to 719-937 (TALRCSAPSS…GNSTTDNSDQ (219 aa)). Disordered regions lie at residues 756 to 795 (QRVCSGEGPPKTDLMAFSPSLPQGPSSTDNPRQPNPDWRY) and 817 to 843 (AGPGGPDQQWPTVSSATPEPEAGEVSP). 5 PXXP repeats span residues 774–777 (PSLP), 786–789 (PRQP), 819–822 (PGGP), 860–863 (PGNP), and 878–881 (PGSP). The 5 X 4 AA repeats of P-X-X-P stretch occupies residues 774 to 881 (PSLPQGPSST…PDKFIIPGSP (108 aa)). Polar residues predominate over residues 775–787 (SLPQGPSSTDNPR). The segment at 888 to 937 (QEPANSQIDKSDFITFGKKEETKKKKKKKKGNKTQEKKEKGNSTTDNSDQ) is disordered. Residues 896–910 (DKSDFITFGKKEETK) show a composition bias toward basic and acidic residues.

As to quaternary structure, forms homodimers in trans (molecules expressed by two different cells). Forms promiscuous heterodimers in cis (at the plasma membrane of the same cell) with other protocadherins.

Its subcellular location is the cell membrane. Calcium-dependent cell-adhesion protein involved in cells self-recognition and non-self discrimination. Thereby, it is involved in the establishment and maintenance of specific neuronal connections in the brain. The protein is Protocadherin alpha-7 of Pan troglodytes (Chimpanzee).